Reading from the N-terminus, the 257-residue chain is NAD-capped RNA hydrolase NudC (257 aa).

Arginine 69 is a substrate binding site. Residues cysteine 98 and cysteine 101 each coordinate Zn(2+). Glutamate 111 is a binding site for substrate. Positions 116 and 119 each coordinate Zn(2+). Position 124 (tyrosine 124) interacts with substrate. Positions 125-248 constitute a Nudix hydrolase domain; that stretch reads PQIAPCIIVA…TVARRLIEDT (124 aa). The a divalent metal cation site is built by alanine 158, glutamate 174, and glutamate 178. Positions 159-180 match the Nudix box motif; it reads GFVEVGETLEQAVAREVMEESG. Substrate is bound at residue 192-199; sequence QPWPFPQS. Glutamate 219 serves as a coordination point for a divalent metal cation. Alanine 241 is a binding site for substrate.

This sequence belongs to the Nudix hydrolase family. NudC subfamily. As to quaternary structure, homodimer. The cofactor is Mg(2+). Mn(2+) is required as a cofactor. It depends on Zn(2+) as a cofactor.

The enzyme catalyses a 5'-end NAD(+)-phospho-ribonucleoside in mRNA + H2O = a 5'-end phospho-adenosine-phospho-ribonucleoside in mRNA + beta-nicotinamide D-ribonucleotide + 2 H(+). The catalysed reaction is NAD(+) + H2O = beta-nicotinamide D-ribonucleotide + AMP + 2 H(+). It carries out the reaction NADH + H2O = reduced beta-nicotinamide D-ribonucleotide + AMP + 2 H(+). MRNA decapping enzyme that specifically removes the nicotinamide adenine dinucleotide (NAD) cap from a subset of mRNAs by hydrolyzing the diphosphate linkage to produce nicotinamide mononucleotide (NMN) and 5' monophosphate mRNA. The NAD-cap is present at the 5'-end of some mRNAs and stabilizes RNA against 5'-processing. Has preference for mRNAs with a 5'-end purine. Catalyzes the hydrolysis of a broad range of dinucleotide pyrophosphates. The protein is NAD-capped RNA hydrolase NudC of Citrobacter koseri (strain ATCC BAA-895 / CDC 4225-83 / SGSC4696).